Reading from the N-terminus, the 116-residue chain is Venom nerve growth factor (116 aa).

Cystine bridges form between Cys14–Cys78, Cys56–Cys106, and Cys66–Cys108.

It belongs to the NGF-beta family. As to quaternary structure, homodimer; non-covalently linked. Not glycosylated. As to expression, expressed by the venom gland.

The protein resides in the secreted. Its function is as follows. Nerve growth factor is important for the development and maintenance of the sympathetic and sensory nervous systems. It stimulates division and differentiation of sympathetic and embryonic sensory neurons as well as basal forebrain cholinergic neurons in the brain. Its relevance in the snake venom is not clear. However, it has been shown to inhibit metalloproteinase-dependent proteolysis of platelet glycoprotein Ib alpha, suggesting a metalloproteinase inhibition to prevent metalloprotease autodigestion and/or protection against prey proteases. Binds a lipid between the two protein chains in the homodimer. The lipid-bound form promotes histamine relase from mouse mast cells, contrary to the lipid-free form. This is Venom nerve growth factor from Naja naja (Indian cobra).